The primary structure comprises 491 residues: Ketol-acid reductoisomerase (NADP(+)) (491 aa).

The KARI N-terminal Rossmann domain occupies A15–S208. NADP(+)-binding positions include C45–Q48, R68, R76, S78, and D108–Q110. The active site involves H132. Residue G158 coordinates NADP(+). KARI C-terminal knotted domains are found at residues S209–Q344 and Y345–M484. D217, E221, E389, and E393 together coordinate Mg(2+). Position 414 (S414) interacts with substrate.

Belongs to the ketol-acid reductoisomerase family. The cofactor is Mg(2+).

It catalyses the reaction (2R)-2,3-dihydroxy-3-methylbutanoate + NADP(+) = (2S)-2-acetolactate + NADPH + H(+). The enzyme catalyses (2R,3R)-2,3-dihydroxy-3-methylpentanoate + NADP(+) = (S)-2-ethyl-2-hydroxy-3-oxobutanoate + NADPH + H(+). Its pathway is amino-acid biosynthesis; L-isoleucine biosynthesis; L-isoleucine from 2-oxobutanoate: step 2/4. The protein operates within amino-acid biosynthesis; L-valine biosynthesis; L-valine from pyruvate: step 2/4. Its function is as follows. Involved in the biosynthesis of branched-chain amino acids (BCAA). Catalyzes an alkyl-migration followed by a ketol-acid reduction of (S)-2-acetolactate (S2AL) to yield (R)-2,3-dihydroxy-isovalerate. In the isomerase reaction, S2AL is rearranged via a Mg-dependent methyl migration to produce 3-hydroxy-3-methyl-2-ketobutyrate (HMKB). In the reductase reaction, this 2-ketoacid undergoes a metal-dependent reduction by NADPH to yield (R)-2,3-dihydroxy-isovalerate. The polypeptide is Ketol-acid reductoisomerase (NADP(+)) (Salmonella arizonae (strain ATCC BAA-731 / CDC346-86 / RSK2980)).